Reading from the N-terminus, the 462-residue chain is L-seryl-tRNA(Sec) selenium transferase (462 aa).

An N6-(pyridoxal phosphate)lysine modification is found at Lys294.

The protein belongs to the SelA family. In terms of assembly, homodecamer; pentamer of dimers. Binds only one seryl-tRNA(Sec) per dimer. The cofactor is pyridoxal 5'-phosphate.

It is found in the cytoplasm. It carries out the reaction L-seryl-tRNA(Sec) + selenophosphate + H(+) = L-selenocysteinyl-tRNA(Sec) + phosphate. Its pathway is aminoacyl-tRNA biosynthesis; selenocysteinyl-tRNA(Sec) biosynthesis; selenocysteinyl-tRNA(Sec) from L-seryl-tRNA(Sec) (bacterial route): step 1/1. Its function is as follows. Converts seryl-tRNA(Sec) to selenocysteinyl-tRNA(Sec) required for selenoprotein biosynthesis. This is L-seryl-tRNA(Sec) selenium transferase from Yersinia pseudotuberculosis serotype O:1b (strain IP 31758).